Reading from the N-terminus, the 127-residue chain is Holo-[acyl-carrier-protein] synthase (127 aa).

Residues Asp-8 and Glu-56 each coordinate Mg(2+).

The protein belongs to the P-Pant transferase superfamily. AcpS family. Mg(2+) serves as cofactor.

Its subcellular location is the cytoplasm. The catalysed reaction is apo-[ACP] + CoA = holo-[ACP] + adenosine 3',5'-bisphosphate + H(+). Transfers the 4'-phosphopantetheine moiety from coenzyme A to a Ser of acyl-carrier-protein. The sequence is that of Holo-[acyl-carrier-protein] synthase from Deinococcus deserti (strain DSM 17065 / CIP 109153 / LMG 22923 / VCD115).